The chain runs to 397 residues: Dual-specificity RNA methyltransferase RlmN (397 aa).

Catalysis depends on Glu-120, which acts as the Proton acceptor. Positions 126-369 constitute a Radical SAM core domain; the sequence is ETDRGTLCVS…VRTPRGRDIL (244 aa). Cysteines 133 and 372 form a disulfide. The [4Fe-4S] cluster site is built by Cys-140, Cys-144, and Cys-147. S-adenosyl-L-methionine contacts are provided by residues 198–199, Ser-230, 252–254, and Asn-329; these read GE and SLH. The active-site S-methylcysteine intermediate is the Cys-372.

The protein belongs to the radical SAM superfamily. RlmN family. [4Fe-4S] cluster is required as a cofactor.

Its subcellular location is the cytoplasm. The catalysed reaction is adenosine(2503) in 23S rRNA + 2 reduced [2Fe-2S]-[ferredoxin] + 2 S-adenosyl-L-methionine = 2-methyladenosine(2503) in 23S rRNA + 5'-deoxyadenosine + L-methionine + 2 oxidized [2Fe-2S]-[ferredoxin] + S-adenosyl-L-homocysteine. The enzyme catalyses adenosine(37) in tRNA + 2 reduced [2Fe-2S]-[ferredoxin] + 2 S-adenosyl-L-methionine = 2-methyladenosine(37) in tRNA + 5'-deoxyadenosine + L-methionine + 2 oxidized [2Fe-2S]-[ferredoxin] + S-adenosyl-L-homocysteine. In terms of biological role, specifically methylates position 2 of adenine 2503 in 23S rRNA and position 2 of adenine 37 in tRNAs. m2A2503 modification seems to play a crucial role in the proofreading step occurring at the peptidyl transferase center and thus would serve to optimize ribosomal fidelity. The chain is Dual-specificity RNA methyltransferase RlmN from Nitrobacter winogradskyi (strain ATCC 25391 / DSM 10237 / CIP 104748 / NCIMB 11846 / Nb-255).